Reading from the N-terminus, the 446-residue chain is Mannan endo-1,6-alpha-mannosidase DCW1 (446 aa).

Positions 1–18 are cleaved as a signal peptide; that stretch reads MRLVTLLSGLVSLVSVFG. N-linked (GlcNAc...) asparagine glycosylation is found at asparagine 31, asparagine 81, asparagine 106, asparagine 200, asparagine 222, asparagine 237, asparagine 262, asparagine 278, asparagine 285, asparagine 334, asparagine 391, and asparagine 397. The interval 389-408 is disordered; the sequence is PYNATNGGNSTGDGAAGTKP. A lipid anchor (GPI-anchor amidated serine) is attached at serine 422. A propeptide spans 423–446 (removed in mature form); it reads RAGAGIITAIIGISIIACALWLVY.

The protein belongs to the glycosyl hydrolase 76 family.

The protein localises to the secreted. Its subcellular location is the cell wall. The protein resides in the cell membrane. It catalyses the reaction Random hydrolysis of (1-&gt;6)-alpha-D-mannosidic linkages in unbranched (1-&gt;6)-mannans.. Required for normal synthesis of the cell wall. In Candida glabrata (strain ATCC 2001 / BCRC 20586 / JCM 3761 / NBRC 0622 / NRRL Y-65 / CBS 138) (Yeast), this protein is Mannan endo-1,6-alpha-mannosidase DCW1 (DCW1).